Reading from the N-terminus, the 371-residue chain is tRNA-specific 2-thiouridylase MnmA (371 aa).

ATP contacts are provided by residues 7 to 14 (AMSGGVDS) and L33. C101 serves as the catalytic Nucleophile. An intrachain disulfide couples C101 to C213. G125 contributes to the ATP binding site. Residues 163–165 (KDQ) form an interaction with tRNA region. Catalysis depends on C213, which acts as the Cysteine persulfide intermediate.

It belongs to the MnmA/TRMU family.

It is found in the cytoplasm. The catalysed reaction is S-sulfanyl-L-cysteinyl-[protein] + uridine(34) in tRNA + AH2 + ATP = 2-thiouridine(34) in tRNA + L-cysteinyl-[protein] + A + AMP + diphosphate + H(+). Catalyzes the 2-thiolation of uridine at the wobble position (U34) of tRNA, leading to the formation of s(2)U34. This is tRNA-specific 2-thiouridylase MnmA from Roseiflexus castenholzii (strain DSM 13941 / HLO8).